Reading from the N-terminus, the 207-residue chain is Outer-membrane lipoprotein carrier protein (207 aa).

Positions 1–23 (MMKPHNLFQFLAVCSLTVAVASA) are cleaved as a signal peptide.

The protein belongs to the LolA family. Monomer.

It is found in the periplasm. Functionally, participates in the translocation of lipoproteins from the inner membrane to the outer membrane. Only forms a complex with a lipoprotein if the residue after the N-terminal Cys is not an aspartate (The Asp acts as a targeting signal to indicate that the lipoprotein should stay in the inner membrane). The protein is Outer-membrane lipoprotein carrier protein of Neisseria gonorrhoeae (strain ATCC 700825 / FA 1090).